We begin with the raw amino-acid sequence, 75 residues long: UPF0291 protein lin1342 (75 aa).

The disordered stretch occupies residues 55 to 75 (IDPKGNDVTPHKIKQMRKNKK). A compositionally biased stretch (basic residues) spans 65-75 (HKIKQMRKNKK).

Belongs to the UPF0291 family.

The protein resides in the cytoplasm. The protein is UPF0291 protein lin1342 of Listeria innocua serovar 6a (strain ATCC BAA-680 / CLIP 11262).